A 503-amino-acid chain; its full sequence is GMP synthase [glutamine-hydrolyzing] (503 aa).

The 187-residue stretch at 3-189 (PVLVVDFGSQ…AFLSSFAAPN (187 aa)) folds into the Glutamine amidotransferase type-1 domain. Catalysis depends on C80, which acts as the Nucleophile. Active-site residues include H165 and E167. Positions 190 to 380 (WDPEQTICGT…LGIPKHIVHR (191 aa)) constitute a GMPS ATP-PPase domain. Position 217–223 (217–223 (SGGVDSV)) interacts with ATP.

In terms of assembly, homodimer.

It carries out the reaction XMP + L-glutamine + ATP + H2O = GMP + L-glutamate + AMP + diphosphate + 2 H(+). The protein operates within purine metabolism; GMP biosynthesis; GMP from XMP (L-Gln route): step 1/1. Functionally, catalyzes the synthesis of GMP from XMP. This chain is GMP synthase [glutamine-hydrolyzing], found in Tropheryma whipplei (strain Twist) (Whipple's bacillus).